We begin with the raw amino-acid sequence, 56 residues long: Large ribosomal subunit protein bL32 (56 aa).

Positions 1–28 (MAVQQNRKTRSKRGMRRSHDALTTAALS) are disordered. Residues 7 to 16 (RKTRSKRGMR) are compositionally biased toward basic residues.

This sequence belongs to the bacterial ribosomal protein bL32 family.

This chain is Large ribosomal subunit protein bL32, found in Vibrio vulnificus (strain CMCP6).